The chain runs to 478 residues: Protein trichome birefringence-like 20 (478 aa).

Residues 10-30 traverse the membrane as a helical; Signal-anchor for type II membrane protein segment; that stretch reads IGLVIFPLILLTIAPILYLFF. Residues 50–68 show a composition bias toward low complexity; it reads SSAISSPSRYNHSSSSSDS. The tract at residues 50-125 is disordered; it reads SSAISSPSRY…KEHRRKKRKR (76 aa). A compositionally biased stretch (polar residues) spans 92–110; sequence SSSLHNNDRLSISSSNGHH. Residues 112-125 are compositionally biased toward basic residues; sequence VTPKKEHRRKKRKR. The GDS motif motif lies at 200-202; sequence GDS. The DCXHWCLPGXXDXWN motif motif lies at 447-461; that stretch reads DCVHWCLPGPIDSWN.

Belongs to the PC-esterase family. TBL subfamily.

It is found in the membrane. May act as a bridging protein that binds pectin and other cell wall polysaccharides. Probably involved in maintaining esterification of pectins. May be involved in the specific O-acetylation of cell wall polymers. This Arabidopsis thaliana (Mouse-ear cress) protein is Protein trichome birefringence-like 20 (TBL20).